The sequence spans 274 residues: Coagulation factor IX (274 aa).

Tyrosine 23 carries the sulfotyrosine modification. Asparagine 25 carries N-linked (GlcNAc...) asparagine glycosylation. Serine 26 is modified (phosphoserine). Asparagine 35 is a glycosylation site (N-linked (GlcNAc...) asparagine). An O-linked (GalNAc...) threonine glycan is attached at threonine 37. N-linked (GlcNAc...) asparagine glycosylation occurs at asparagine 40. The 226-residue stretch at 49-274 (VVGGEDAARG…IYTKVSRYEV (226 aa)) folds into the Peptidase S1 domain. Cysteines 74 and 90 form a disulfide. The active-site Charge relay system is histidine 89. Residues glutamate 103, asparagine 105, glutamate 110, and glutamate 113 each contribute to the Ca(2+) site. The N-linked (GlcNAc...) asparagine glycan is linked to asparagine 128. Catalysis depends on aspartate 137, which acts as the Charge relay system. Disulfide bonds link cysteine 204–cysteine 218 and cysteine 229–cysteine 257. The active-site Charge relay system is serine 233.

Belongs to the peptidase S1 family. Heterodimer of a light chain and a heavy chain; disulfide-linked. Interacts (inactive and activated) with F11 (activated) in calcium-dependent manner. Interacts with SERPINC1. In terms of processing, activated by factor XIa, which excises the activation peptide. The propeptide can also be removed by snake venom protease. Activated by coagulation factor VIIa-tissue factor (F7-F3) complex in calcium-dependent manner.

Its subcellular location is the secreted. The enzyme catalyses Selective cleavage of Arg-|-Ile bond in factor X to form factor Xa.. Factor IX is a vitamin K-dependent plasma protein that participates in the intrinsic pathway of blood coagulation by converting factor X to its active form in the presence of Ca(2+) ions, phospholipids, and factor VIIIa. This chain is Coagulation factor IX (F9), found in Ovis aries (Sheep).